The primary structure comprises 352 residues: N-acetyl-gamma-glutamyl-phosphate reductase (352 aa).

The active site involves C151.

The protein belongs to the NAGSA dehydrogenase family. Type 1 subfamily.

It is found in the cytoplasm. The enzyme catalyses N-acetyl-L-glutamate 5-semialdehyde + phosphate + NADP(+) = N-acetyl-L-glutamyl 5-phosphate + NADPH + H(+). The protein operates within amino-acid biosynthesis; L-arginine biosynthesis; N(2)-acetyl-L-ornithine from L-glutamate: step 3/4. Its function is as follows. Catalyzes the NADPH-dependent reduction of N-acetyl-5-glutamyl phosphate to yield N-acetyl-L-glutamate 5-semialdehyde. The sequence is that of N-acetyl-gamma-glutamyl-phosphate reductase from Renibacterium salmoninarum (strain ATCC 33209 / DSM 20767 / JCM 11484 / NBRC 15589 / NCIMB 2235).